The following is a 167-amino-acid chain: Claudin domain-containing protein 2 (167 aa).

4 helical membrane passes run 13-32 (LLNL…NYWT), 61-81 (VSAA…GIGI), 96-116 (TIVL…VYTS), and 130-150 (YFFG…FLLA).

This sequence belongs to the PMP-22/EMP/MP20 family.

It is found in the membrane. The chain is Claudin domain-containing protein 2 (Cldnd2) from Mus musculus (Mouse).